Consider the following 720-residue polypeptide: MASGNRKVTIQLVDDGAGTGAGGPQLFKGQNYEAIRRACLDSGILFRDPCFPAGPDALGYDKLGPDSEKAKGVEWKRPHEFCAEPQFICEDMSRTDVCQGSLGNCWLLAAAASLTLYPRLLYRVVPPGQGFQDGYAGVFHFQLWQFGRWVDVVVDDKLPVREGKLMFVRSEQRNEFWAPLLEKAYAKLHGSYEVMRGGHMNEAFVDFTGGVGEVLYLRQNTPGVFAALRHALAKESLVGATALSDRGEIRTDEGLVKGHAYSVTGTHKMSLGFTKVRLLRLRNPWGRVEWSGPWSDSCPRWDMLPSEWRDALLVKKEDGEFWMELQDFLTHFNTVQICSLSPEVLGPSPAGGGWHIHIFQGRWVRGFNSGGSQPSAENFWTNPQFRLTLLEPDEEEDDDDEEGPWGGWGAAGARGPARGGRVPKCTVLLSLIQRNRRCLRAKGLTYLTVGFHVFQIPEELLDLWDSPRSRALLPGLLRADRSVFCARRDVSRRCRLPPGHYLVVPSASRVGDEADFTLRIFSERSHTAVEIDDVISADLDALQAPYKPLELELAQLFLELAGEEEELNALQLQTLISIALEPARANTRTPGEIGLRTCEQLVQCFGRGQRLSLHHFQELWGHLMSWQATFDKFDEDASGTMNSCELRLALTAAGFHLNNQLTQSLTSRYRDSRLRVDFERFVGCAARLTCIFRHCCQHLDGGEGVVCLTHKQWSEVATFS.

The 297-residue stretch at Leu-45–Ser-341 folds into the Calpain catalytic domain. Residues Cys-105, His-259, and Asn-283 contribute to the active site. Positions Pro-342–Ala-541 are domain III. The segment covering Asp-393–Gly-403 has biased composition (acidic residues). The interval Asp-393–Gly-415 is disordered. Positions Leu-542–Ser-720 are domain IV. One can recognise an EF-hand domain in the interval Gly-621–His-656. Residues Asp-634, Asp-636, Ser-638, Thr-640, and Glu-645 each coordinate Ca(2+).

The protein belongs to the peptidase C2 family. As to expression, expression localized to the cortex of the hair follicle during the anagen phase of hair cycle.

Its function is as follows. Calcium-regulated non-lysosomal thiol-protease. The chain is Calpain-12 (Capn12) from Mus musculus (Mouse).